The primary structure comprises 138 residues: ATP synthase epsilon chain (138 aa).

It belongs to the ATPase epsilon chain family. As to quaternary structure, F-type ATPases have 2 components, CF(1) - the catalytic core - and CF(0) - the membrane proton channel. CF(1) has five subunits: alpha(3), beta(3), gamma(1), delta(1), epsilon(1). CF(0) has three main subunits: a, b and c.

It is found in the cell inner membrane. Its function is as follows. Produces ATP from ADP in the presence of a proton gradient across the membrane. The polypeptide is ATP synthase epsilon chain (Ruthia magnifica subsp. Calyptogena magnifica).